Consider the following 371-residue polypeptide: Carnitine monooxygenase oxygenase subunit (371 aa).

The region spanning 44–152 (WICVAHGSEL…VEEYAGFVFI (109 aa)) is the Rieske domain. [2Fe-2S] cluster is bound by residues C86, H88, C106, and H109. Residues H208, H213, and D323 each coordinate Fe cation.

Belongs to the bacterial ring-hydroxylating dioxygenase alpha subunit family. CntA subfamily. As to quaternary structure, composed of an oxygenase subunit and a reductase subunit. [2Fe-2S] cluster is required as a cofactor. The cofactor is Fe cation.

The enzyme catalyses (R)-carnitine + NADH + O2 + H(+) = (3R)-3-hydroxy-4-oxobutanoate + trimethylamine + NAD(+) + H2O. It carries out the reaction (R)-carnitine + NADPH + O2 + H(+) = (3R)-3-hydroxy-4-oxobutanoate + trimethylamine + NADP(+) + H2O. The protein operates within amine and polyamine metabolism; carnitine metabolism. Its activity is regulated as follows. Inhibited by EDTA. Its function is as follows. Converts carnitine to trimethylamine and malic semialdehyde. Acts on both enantiomers. The protein is Carnitine monooxygenase oxygenase subunit of Acinetobacter pittii (strain PHEA-2).